The following is a 371-amino-acid chain: Cytochrome b (371 aa).

Helical transmembrane passes span 25 to 45, 69 to 90, 105 to 125, and 170 to 190; these read FGSMLLTCLALQVLTGFFLAV, WMMQNLHAIGASMFFICIYIHI, WMSGITLLITLMATAFFGYVL, and FFALHFILPFAIISLSSLHII. Heme b is bound by residues His75 and His89. Heme b contacts are provided by His174 and His188. Residue His193 coordinates a ubiquinone. 4 helical membrane passes run 218–238, 280–300, 312–332, and 339–358; these read HKDLLLLTLMMLSLLIIVSFF, LGGALALVMSIMILFTIPFTH, FSQLMFWTLVSTFITITWAAT, and FIVISQVTSTLYFTFFLLIP.

It belongs to the cytochrome b family. As to quaternary structure, the cytochrome bc1 complex contains 3 respiratory subunits (MT-CYB, CYC1 and UQCRFS1), 2 core proteins (UQCRC1 and UQCRC2) and probably 6 low-molecular weight proteins. Heme b is required as a cofactor.

The protein localises to the mitochondrion inner membrane. Functionally, component of the ubiquinol-cytochrome c reductase complex (complex III or cytochrome b-c1 complex) that is part of the mitochondrial respiratory chain. The b-c1 complex mediates electron transfer from ubiquinol to cytochrome c. Contributes to the generation of a proton gradient across the mitochondrial membrane that is then used for ATP synthesis. The protein is Cytochrome b (MT-CYB) of Leiopython albertisii (Northern white-lipped python).